The following is a 355-amino-acid chain: Acidic fibroblast growth factor intracellular-binding protein B (355 aa).

As to quaternary structure, interacts with IER2.

Its subcellular location is the nucleus. It localises to the endomembrane system. Its function is as follows. Mediates with IER2 FGF-signaling in Kupffer's vesicle ciliogenesis and in the establishment of laterality in the embryo. May be involved in mitogenic function of FGF1. In Danio rerio (Zebrafish), this protein is Acidic fibroblast growth factor intracellular-binding protein B.